Here is a 258-residue protein sequence, read N- to C-terminus: 6-carboxyhexanoate--CoA ligase (258 aa).

The protein belongs to the BioW family. In terms of assembly, homodimer. Requires Mg(2+) as cofactor.

The catalysed reaction is heptanedioate + ATP + CoA = 6-carboxyhexanoyl-CoA + AMP + diphosphate. The protein operates within metabolic intermediate metabolism; pimeloyl-CoA biosynthesis; pimeloyl-CoA from pimelate: step 1/1. In terms of biological role, catalyzes the transformation of pimelate into pimeloyl-CoA with concomitant hydrolysis of ATP to AMP. The chain is 6-carboxyhexanoate--CoA ligase from Bacillus atrophaeus (strain 1942).